A 133-amino-acid polypeptide reads, in one-letter code: Secretin (133 aa).

A signal peptide spans 1–22 (MEPPLPTPMLLLLLLLLSSSAA). Positions 23-30 (LPAPPRTP) are excised as a propeptide. A Valine amide modification is found at Val-58. Phosphoserine is present on Ser-62. Positions 62–133 (SEQDTENIPE…EWTETTRPPR (72 aa)) are excised as a propeptide.

It belongs to the glucagon family. As to expression, highly expressed in the intestine. Also expressed in the hippocampus, cerebellum and the brain stem in adult mouse brain. In the hippocampus, expressed in the dentate gyrus, the hilus and the molecular layer.

Its subcellular location is the secreted. Hormone involved in different processes, such as regulation of the pH of the duodenal content, food intake and water homeostasis. Exerts its biological effects by binding to secretin receptor (SCTR), a G-protein coupled receptor expressed in the basolateral domain of several cells. Acts as a key gastrointestinal hormone by regulating the pH of the duodenal content. Secreted by S cells of the duodenum in the crypts of Lieberkuehn and regulates the pH of the duodenum by (1) inhibiting the secretion of gastric acid from the parietal cells of the stomach and (2) stimulating the production of bicarbonate (NaHCO(3)) from the ductal cells of the pancreas. Production of bicarbonate is essential to neutralize the pH and ensure no damage is done to the small intestine by the gastric acid. In addition to regulating the pH of the duodenal content, plays a central role in diet induced thermogenesis: acts as a non-sympathetic brown fat (BAT) activator mediating prandial thermogenesis, which consequentially induces satiation. Mechanistically, secretin released by the gut after a meal binds to secretin receptor (SCTR) in brown adipocytes, activating brown fat thermogenesis by stimulating lipolysis, which is sensed in the brain and promotes satiation. Also able to stimulate lipolysis in white adipocytes. Also plays an important role in cellular osmoregulation: released into the systemic circulation in response to hyperosmolality and acts at different levels in the hypothalamus, pituitary and kidney to regulate water homeostasis. Also plays a role in the central nervous system, possibly by acting as a neuropeptide hormone: required for hippocampal synaptic function and neural progenitor cells maintenance. The chain is Secretin from Mus musculus (Mouse).